Consider the following 57-residue polypeptide: Small ribosomal subunit protein bS21 (57 aa).

This sequence belongs to the bacterial ribosomal protein bS21 family.

In Bacillus anthracis (strain A0248), this protein is Small ribosomal subunit protein bS21.